Consider the following 576-residue polypeptide: Potassium-transporting ATPase potassium-binding subunit (576 aa).

A run of 12 helical transmembrane segments spans residues 3–23 (IFLD…ISPI), 68–88 (LYAL…TLLF), 137–157 (GLAL…LVLI), 179–199 (ILYV…SQGV), 267–287 (FEAF…GYMI), 294–314 (WFLY…QYYF), 339–359 (FGIG…CGAV), 369–389 (LGGL…GGVG), 391–411 (GLYG…LMIG), 430–450 (VVIT…ALYT), 495–515 (ITTG…VFYM), and 537–557 (LVFG…TFLP).

Belongs to the KdpA family. The system is composed of three essential subunits: KdpA, KdpB and KdpC.

The protein localises to the cell inner membrane. In terms of biological role, part of the high-affinity ATP-driven potassium transport (or Kdp) system, which catalyzes the hydrolysis of ATP coupled with the electrogenic transport of potassium into the cytoplasm. This subunit binds the periplasmic potassium ions and delivers the ions to the membrane domain of KdpB through an intramembrane tunnel. The sequence is that of Potassium-transporting ATPase potassium-binding subunit from Hydrogenobaculum sp. (strain Y04AAS1).